Here is a 182-residue protein sequence, read N- to C-terminus: Thioredoxin F-type, chloroplastic (182 aa).

Residues 1-69 (MALNLCTSPK…SVRSSLETAG (69 aa)) constitute a chloroplast transit peptide. Residues 70–181 (PTVTVGKVTE…LVAAIDTVRS (112 aa)) enclose the Thioredoxin domain. Residues C106 and C109 each act as nucleophile in the active site. Residues C106 and C109 are joined by a disulfide bond.

The protein belongs to the thioredoxin family. Plant F-type subfamily. In terms of assembly, forms a complex with heterodimeric ferredoxin-thioredoxin reductase (FTR) and ferredoxin.

It is found in the plastid. It localises to the chloroplast. In terms of biological role, participates in various redox reactions through the reversible oxidation of the active center dithiol to a disulfide. The F form is known to activate a number of enzymes of the photosynthetic carbon cycle. In Pisum sativum (Garden pea), this protein is Thioredoxin F-type, chloroplastic.